The sequence spans 464 residues: Clusterin-like protein 1 (464 aa).

The N-terminal stretch at 1 to 20 is a signal peptide; sequence MQPPLFVISVYLLWLKYCDS. A coiled-coil region spans residues 56–109; that stretch reads IKQMKIMMERREEEHAKLMKALKKCKEEKQEAQKLMNEVQERLEEEEKLCQASS. 5 cysteine pairs are disulfide-bonded: C105/C331, C116/C323, C119/C320, C124/C313, and C131/C303. N-linked (GlcNAc...) asparagine glycans are attached at residues N195, N255, N309, N349, N398, and N429.

It belongs to the clusterin family.

The protein resides in the secreted. The chain is Clusterin-like protein 1 from Rattus norvegicus (Rat).